The following is an 895-amino-acid chain: DNA mismatch repair protein MutS (895 aa).

607–614 (GPNMSGKS) is a binding site for ATP.

This sequence belongs to the DNA mismatch repair MutS family.

Functionally, this protein is involved in the repair of mismatches in DNA. It is possible that it carries out the mismatch recognition step. This protein has a weak ATPase activity. The chain is DNA mismatch repair protein MutS from Bacillus cytotoxicus (strain DSM 22905 / CIP 110041 / 391-98 / NVH 391-98).